The sequence spans 469 residues: 3-isopropylmalate dehydratase large subunit (469 aa).

[4Fe-4S] cluster is bound by residues Cys-349, Cys-410, and Cys-413.

Belongs to the aconitase/IPM isomerase family. LeuC type 1 subfamily. As to quaternary structure, heterodimer of LeuC and LeuD. Requires [4Fe-4S] cluster as cofactor.

The catalysed reaction is (2R,3S)-3-isopropylmalate = (2S)-2-isopropylmalate. It functions in the pathway amino-acid biosynthesis; L-leucine biosynthesis; L-leucine from 3-methyl-2-oxobutanoate: step 2/4. Functionally, catalyzes the isomerization between 2-isopropylmalate and 3-isopropylmalate, via the formation of 2-isopropylmaleate. The sequence is that of 3-isopropylmalate dehydratase large subunit from Aromatoleum aromaticum (strain DSM 19018 / LMG 30748 / EbN1) (Azoarcus sp. (strain EbN1)).